The primary structure comprises 234 residues: Thrombin-like enzyme contortrixobin (234 aa).

The Peptidase S1 domain occupies 1 to 225; it reads VVGGDECNIN…YNDWIQSIIA (225 aa). Cystine bridges form between Cys-7-Cys-139, Cys-26-Cys-42, Cys-74-Cys-232, Cys-118-Cys-186, Cys-150-Cys-165, and Cys-176-Cys-201. Catalysis depends on charge relay system residues His-41 and Asp-86. Ser-180 serves as the catalytic Charge relay system.

In terms of assembly, monomer. Post-translationally, not glycosylated. In terms of tissue distribution, expressed by the venom gland.

Its subcellular location is the secreted. Strongly inhibited by diisopropylfluorophosphate (DFP) and to a lesser extent by PMSF, benzamidine and 4,6-diamidino-2-phenylindole. Low inhibition by hirudin. Functionally, thrombin-like snake venom serine protease that cleaves beta chain of fibrinogen (FGB), releasing fibrinopeptide B. Has a coagulant activity activating blood coagulation factors V (F5) and XIII (F13A1). The polypeptide is Thrombin-like enzyme contortrixobin (Agkistrodon contortrix contortrix (Southern copperhead)).